We begin with the raw amino-acid sequence, 122 residues long: Small ribosomal subunit protein uS13c (122 aa).

The protein belongs to the universal ribosomal protein uS13 family. As to quaternary structure, part of the 30S ribosomal subunit.

The protein resides in the plastid. It localises to the chloroplast. Functionally, located at the top of the head of the 30S subunit, it contacts several helices of the 16S rRNA. This Cyanidium caldarium (Red alga) protein is Small ribosomal subunit protein uS13c.